The sequence spans 825 residues: Endoglucanase C (825 aa).

A signal peptide spans 1 to 28 (MRNKLRRLLAIMMAVLLITSLFAPMVSA). E219 acts as the Proton donor in catalysis. E335 (nucleophile) is an active-site residue. Residues 607–621 (DRESVPEPVEHDTKG) show a composition bias toward basic and acidic residues. The disordered stretch occupies residues 607-635 (DRESVPEPVEHDTKGDSALPSDFEDGTRQ).

Belongs to the glycosyl hydrolase 5 (cellulase A) family.

It catalyses the reaction Endohydrolysis of (1-&gt;4)-beta-D-glucosidic linkages in cellulose, lichenin and cereal beta-D-glucans.. The sequence is that of Endoglucanase C (celC) from Evansella cellulosilytica (strain ATCC 21833 / DSM 2522 / FERM P-1141 / JCM 9156 / N-4) (Bacillus cellulosilyticus).